The primary structure comprises 354 residues: MSKVQSITRESWILSTFPEWGSWLNEEIEQEQVAPGTFAMWWLGCTGIWLKSEGGTNVCVDFWCGTGKQSHGNPLMKTGHQMQRMAGVKKLQPNLRTTPFVLDPFAIRQIDAVLATHDHNDHIDVNVAAAVMQNCADDVPFIGPQTCVDLWVGWGVPKERCIVVKPGDVVKVKDIEIHALDAFDRTALITLPADQKAAGVLPEGMDVRAVNYLFKTPGGNLYHSGDSHYSNYYAKHGNEHQIDVALGSYGENPRGITDKMTSADILRMAESLNTKVVIPFHHDIWSNFQADPQEIRVLWEMKKDRLKYGFKPFIWQVGGKFTWPLDKDNFEYHYPRGFDDCFTIEPDLPFKSFL.

Belongs to the UlaG family. A divalent metal cation serves as cofactor.

The protein resides in the cytoplasm. It catalyses the reaction L-ascorbate 6-phosphate + H2O = 3-dehydro-L-gulonate 6-phosphate. It participates in cofactor degradation; L-ascorbate degradation; D-xylulose 5-phosphate from L-ascorbate: step 1/4. Its function is as follows. Probably catalyzes the hydrolysis of L-ascorbate-6-P into 3-keto-L-gulonate-6-P. Is essential for L-ascorbate utilization under anaerobic conditions. The protein is Probable L-ascorbate-6-phosphate lactonase UlaG of Salmonella choleraesuis (strain SC-B67).